The following is a 309-amino-acid chain: Methionyl-tRNA formyltransferase (309 aa).

109-112 (SLLP) is a binding site for (6S)-5,6,7,8-tetrahydrofolate.

It belongs to the Fmt family.

The enzyme catalyses L-methionyl-tRNA(fMet) + (6R)-10-formyltetrahydrofolate = N-formyl-L-methionyl-tRNA(fMet) + (6S)-5,6,7,8-tetrahydrofolate + H(+). Its function is as follows. Attaches a formyl group to the free amino group of methionyl-tRNA(fMet). The formyl group appears to play a dual role in the initiator identity of N-formylmethionyl-tRNA by promoting its recognition by IF2 and preventing the misappropriation of this tRNA by the elongation apparatus. In Clostridium novyi (strain NT), this protein is Methionyl-tRNA formyltransferase.